Consider the following 345-residue polypeptide: MKTLQELTRPNIWRLKPYSSARDEYSGAAASVFLDANENPYNLPHNRYPDPMQRDLKLELSKIKKVAPAHIFLGNGSDEAIDLVFRAFCEPGRDNVVAIDPTYGMYQVCADVNDVEYRKVLLHDDFQFSADELLAVADERTKMIFLCSPNNPTGNDLLRSEIIKVINDFEGLVILDEAYNDFSDEPSFLSELDKYPNLIILQTFSKAFGCAAIRLGMAFASEGIIGVLNKIKYPYNVNQLTQQQAIEMLHKYYEIERWVKTLKEERGYLEEAFVELPWVLQVFPSNANFFLARVTDAVKIYNYLVGEGIIVRNRNSISLCGNCLRVTVGTRAENAKLIGALKKYQ.

Position 206 is an N6-(pyridoxal phosphate)lysine (Lys206).

This sequence belongs to the class-II pyridoxal-phosphate-dependent aminotransferase family. Histidinol-phosphate aminotransferase subfamily. In terms of assembly, homodimer. Pyridoxal 5'-phosphate is required as a cofactor.

The enzyme catalyses L-histidinol phosphate + 2-oxoglutarate = 3-(imidazol-4-yl)-2-oxopropyl phosphate + L-glutamate. The protein operates within amino-acid biosynthesis; L-histidine biosynthesis; L-histidine from 5-phospho-alpha-D-ribose 1-diphosphate: step 7/9. The chain is Histidinol-phosphate aminotransferase from Bacteroides fragilis (strain YCH46).